A 337-amino-acid chain; its full sequence is DNA-directed RNA polymerase subunit alpha (337 aa).

The segment at 1–233 is alpha N-terminal domain (alpha-NTD); that stretch reads MVREKVTVST…DLFIPFLHME (233 aa). An alpha C-terminal domain (alpha-CTD) region spans residues 264–337; the sequence is NKKIALKSIF…FVIDLAKNKF (74 aa).

The protein belongs to the RNA polymerase alpha chain family. In terms of assembly, in plastids the minimal PEP RNA polymerase catalytic core is composed of four subunits: alpha, beta, beta', and beta''. When a (nuclear-encoded) sigma factor is associated with the core the holoenzyme is formed, which can initiate transcription.

The protein resides in the plastid. The protein localises to the chloroplast. It carries out the reaction RNA(n) + a ribonucleoside 5'-triphosphate = RNA(n+1) + diphosphate. Functionally, DNA-dependent RNA polymerase catalyzes the transcription of DNA into RNA using the four ribonucleoside triphosphates as substrates. This chain is DNA-directed RNA polymerase subunit alpha, found in Atropa belladonna (Belladonna).